We begin with the raw amino-acid sequence, 270 residues long: Dihydroorotate dehydrogenase B (NAD(+)), catalytic subunit (270 aa).

FMN is bound by residues S12 and 35–36 (KT). Substrate contacts are provided by residues K35, 59–63 (NRIGL), and N114. An FMN-binding site is contributed by N114. Catalysis depends on C117, which acts as the Nucleophile. Residues K153 and V179 each contribute to the FMN site. Residue 180–181 (NT) participates in substrate binding. FMN-binding positions include G199, 226–227 (GG), and 248–249 (GS).

The protein belongs to the dihydroorotate dehydrogenase family. Type 1 subfamily. As to quaternary structure, heterotetramer of 2 PyrK and 2 PyrD type B subunits. The cofactor is FMN.

It localises to the cytoplasm. The enzyme catalyses (S)-dihydroorotate + NAD(+) = orotate + NADH + H(+). The protein operates within pyrimidine metabolism; UMP biosynthesis via de novo pathway; orotate from (S)-dihydroorotate (NAD(+) route): step 1/1. Its function is as follows. Catalyzes the conversion of dihydroorotate to orotate with NAD(+) as electron acceptor. The polypeptide is Dihydroorotate dehydrogenase B (NAD(+)), catalytic subunit (pyrD) (Thermotoga maritima (strain ATCC 43589 / DSM 3109 / JCM 10099 / NBRC 100826 / MSB8)).